A 325-amino-acid polypeptide reads, in one-letter code: Peroxidase RIP1 (325 aa).

The N-terminal stretch at 1 to 21 (MASSSPCQIFLVFVMVTLVTS) is a signal peptide. 4 disulfide bridges follow: Cys38-Cys118, Cys71-Cys76, Cys125-Cys321, and Cys206-Cys231. Catalysis depends on His69, which acts as the Proton acceptor. Ca(2+) contacts are provided by Asp70, Val73, Gly75, Asp77, and Ser79. Asn87 carries N-linked (GlcNAc...) asparagine glycosylation. Pro169 is a substrate binding site. The N-linked (GlcNAc...) asparagine glycan is linked to Asn174. His199 is a binding site for heme b. Ca(2+) is bound at residue Thr200. An N-linked (GlcNAc...) asparagine glycan is attached at Asn215. Ca(2+)-binding residues include Asp244, Thr246, and Glu251.

This sequence belongs to the peroxidase family. Classical plant (class III) peroxidase subfamily. The cofactor is heme b. Ca(2+) is required as a cofactor. As to expression, expressed in the differentiating root epidermis following inoculation with the bacterial symbiont Sinorhizobium meliloti.

It localises to the secreted. The enzyme catalyses 2 a phenolic donor + H2O2 = 2 a phenolic radical donor + 2 H2O. In terms of biological role, removal of H(2)O(2), oxidation of toxic reductants, biosynthesis and degradation of lignin, suberization, auxin catabolism, response to environmental stresses such as wounding, pathogen attack and oxidative stress. These functions might be dependent on each isozyme/isoform in each plant tissue. The polypeptide is Peroxidase RIP1 (Medicago truncatula (Barrel medic)).